The primary structure comprises 102 residues: RNA-binding protein Hfq (102 aa).

Positions 9–68 (DPFLNALRRERVPVSIYLVNGIKLQGQIESFDQFVILLKNTVSQMVYKHAISTVVPSRPV) constitute a Sm domain. The segment at 63–102 (VPSRPVSHHSNNAGGGASNNYHHGSNVQGSTAQQDSEETE) is disordered. Over residues 70 to 88 (HHSNNAGGGASNNYHHGSN) the composition is skewed to low complexity.

It belongs to the Hfq family. As to quaternary structure, homohexamer.

Functionally, RNA chaperone that binds small regulatory RNA (sRNAs) and mRNAs to facilitate mRNA translational regulation in response to envelope stress, environmental stress and changes in metabolite concentrations. Also binds with high specificity to tRNAs. The protein is RNA-binding protein Hfq of Salmonella choleraesuis (strain SC-B67).